The sequence spans 350 residues: 3-isopropylmalate dehydrogenase (350 aa).

G76–E87 contacts NAD(+). Positions 94, 104, 132, and 217 each coordinate substrate. Positions 217, 241, and 245 each coordinate Mg(2+). G275 to N287 is a binding site for NAD(+).

This sequence belongs to the isocitrate and isopropylmalate dehydrogenases family. LeuB type 1 subfamily. In terms of assembly, homodimer. It depends on Mg(2+) as a cofactor. Requires Mn(2+) as cofactor.

It is found in the cytoplasm. It catalyses the reaction (2R,3S)-3-isopropylmalate + NAD(+) = 4-methyl-2-oxopentanoate + CO2 + NADH. It functions in the pathway amino-acid biosynthesis; L-leucine biosynthesis; L-leucine from 3-methyl-2-oxobutanoate: step 3/4. Functionally, catalyzes the oxidation of 3-carboxy-2-hydroxy-4-methylpentanoate (3-isopropylmalate) to 3-carboxy-4-methyl-2-oxopentanoate. The product decarboxylates to 4-methyl-2 oxopentanoate. In Listeria innocua serovar 6a (strain ATCC BAA-680 / CLIP 11262), this protein is 3-isopropylmalate dehydrogenase.